A 295-amino-acid polypeptide reads, in one-letter code: MKIAILSRNSKLYSTRRLIEAGRKRGHTVRILDPLRCYMRIAADGFSLHYKGKPITGFDAVIPRIGASVTRYGTAVLRQLEFMGTYTPNPSDAILRSRDKLRAHQLLAAQGIDMPVTVFGDNPDDTQDLLSMLGPPPHVVKLNEGAQGAGVILTEKASASRGVVEALRGLYANFIVQEFIGEAEGADLRCFVVGDKVVAAMRRQAAEGDFRSNLHLGGTAAVAEATEQEQEVAVRSARALGLAVAGVDLIRSRRGPLVLEVNSTPGLEGVEGVCGVDVAAAIVVHLEQSVRRSAG.

The 184-residue stretch at 104–287 (HQLLAAQGID…VAAAIVVHLE (184 aa)) folds into the ATP-grasp domain. Residues K141, 178-179 (EF), D187, and 211-213 (RSN) contribute to the ATP site. Mg(2+) is bound by residues D248, E260, and N262. Mn(2+) is bound by residues D248, E260, and N262.

The protein belongs to the RimK family. The cofactor is Mg(2+). It depends on Mn(2+) as a cofactor.

The protein is Probable alpha-L-glutamate ligase of Xanthomonas axonopodis pv. citri (strain 306).